Reading from the N-terminus, the 563-residue chain is Septation ring formation regulator EzrA (563 aa).

Residues 1-2 (ME) are Extracellular-facing. The chain crosses the membrane as a helical span at residues 3–21 (LVIGLLVILLALFAAGYFF). Residues 22–563 (RKKIYTEIDR…KKIKADQSAS (542 aa)) are Cytoplasmic-facing. Coiled coils occupy residues 133–159 (EEKS…AYSH), 243–276 (KGYK…ELDV), and 309–529 (SKMP…ERLF).

Belongs to the EzrA family.

It localises to the cell membrane. Functionally, negative regulator of FtsZ ring formation; modulates the frequency and position of FtsZ ring formation. Inhibits FtsZ ring formation at polar sites. Interacts either with FtsZ or with one of its binding partners to promote depolymerization. The polypeptide is Septation ring formation regulator EzrA (Bacillus velezensis (strain DSM 23117 / BGSC 10A6 / LMG 26770 / FZB42) (Bacillus amyloliquefaciens subsp. plantarum)).